Consider the following 476-residue polypeptide: 4-(hydroxymethyl)benzenesulfonate dehydrogenase TsaD1 (476 aa).

NAD(+) is bound by residues 154 to 155, 178 to 181, and 230 to 231; these read WN, KAAE, and GS. The active-site Proton acceptor is E252. NAD(+) is bound at residue L253. The active-site Nucleophile is the C286. NAD(+) is bound at residue E380.

This sequence belongs to the aldehyde dehydrogenase family. Homodimer.

It carries out the reaction 4-(hydroxymethyl)benzenesulfonate + NAD(+) = 4-formylbenzenesulfonate + NADH + H(+). Its function is as follows. Involved in the toluene-4-sulfonate degradation pathway. Does not discriminate between the sulfonate and the carboxyl substituents and can also be involved in the p-toluenecarboxylate degradation pathway. The protein is 4-(hydroxymethyl)benzenesulfonate dehydrogenase TsaD1 (tsaD1) of Comamonas testosteroni (Pseudomonas testosteroni).